The chain runs to 297 residues: Transmembrane protein 178A (297 aa).

Positions 1–25 (MEPRALVTALSLGLSLCSLGLLVTA) are cleaved as a signal peptide. At 26–179 (IFTDHWYETD…LLHLRRITAG (154 aa)) the chain is on the extracellular side. Basic and acidic residues predominate over residues 41–57 (ESCERSRAGADPPDQKN). Residues 41–86 (ESCERSRAGADPPDQKNRLMPLSHLPLRDSPPLGRRLLPGGPGRSD) form a disordered region. The span at 68–79 (RDSPPLGRRLLP) shows a compositional bias: low complexity. A glycan (N-linked (GlcNAc...) asparagine) is linked at Asn158. Residues 180 to 200 (FLGMAVAVLLCGCIVATVSFF) form a helical membrane-spanning segment. Topologically, residues 201-208 (WEESLTQH) are cytoplasmic. A helical membrane pass occupies residues 209–229 (VAGLLFLMTGIFCTISLCTYA). The Extracellular portion of the chain corresponds to 230–257 (ASVSYDLNRVPKLIYSLPHDVEHGYSWS). The helical transmembrane segment at 258–278 (IFCAWCSLGFIVAAGGLCIAY) threads the bilayer. Residues 279 to 297 (PFISRTKIAHLKSGRDSTV) are Cytoplasmic-facing.

This sequence belongs to the TMEM178 family. As to quaternary structure, interacts with STIM1. As to expression, highly expressed in the bone and its expression increases during osteoclastogenesis.

It is found in the endoplasmic reticulum membrane. Acts as a negative regulator of osteoclast differentiation in basal and inflammatory conditions by regulating TNFSF11-induced Ca (2+) fluxes, thereby controlling the induction of NFATC1. This Mus musculus (Mouse) protein is Transmembrane protein 178A (Tmem178a).